Consider the following 382-residue polypeptide: U11/U12 small nuclear ribonucleoprotein 59 kDa protein (382 aa).

The stretch at 31–63 (NTKNITDQLKQLQDTLNLAKSMEKELEALKMIK) forms a coiled coil. Positions 274–297 (SEENTTLTTSNKTNNDTDKDSNTN) are disordered. Positions 277–287 (NTTLTTSNKTN) are enriched in low complexity.

Component of the U11/U12 snRNPs that are part of the U12-type spliceosome.

It is found in the nucleus. The protein is U11/U12 small nuclear ribonucleoprotein 59 kDa protein (SNRNP59) of Arabidopsis thaliana (Mouse-ear cress).